Reading from the N-terminus, the 317-residue chain is E3 ubiquitin-protein ligase NRDP1 (317 aa).

The segment at 18 to 57 (CPICSGVLEEPVQAPHCEHAFCNACITQWFSQQQTCPVDR) adopts an RING-type; degenerate zinc-finger fold. The segment at 78 to 138 (KLQIACDNAV…LPNHNCIKHL (61 aa)) adopts an SIAH-type; degenerate zinc-finger fold.

Interacts with USP8, ERBB3, PRKN and BIRC6. Interacts with CSF2RB, EPOR, IL3RA, MYD88 and TBK1. Interacts with Clec16a. Autoubiquitinated. Autoubiquitination leads to proteasomal degradation. Deubiquitinated by USP8 to get stabilized which induces apoptosis.

The catalysed reaction is S-ubiquitinyl-[E2 ubiquitin-conjugating enzyme]-L-cysteine + [acceptor protein]-L-lysine = [E2 ubiquitin-conjugating enzyme]-L-cysteine + N(6)-ubiquitinyl-[acceptor protein]-L-lysine.. Its pathway is protein modification; protein ubiquitination. Its function is as follows. Acts as E3 ubiquitin-protein ligase and regulates the degradation of target proteins. Polyubiquitinates MYD88. Negatively regulates MYD88-dependent production of pro-inflammatory cytokines. Can promote TRIF-dependent production of type I interferon and inhibits infection with vesicular stomatitis virus. Also promotes activation of TBK1 and IRF3. Involved in the ubiquitination of erythropoietin (EPO) and interleukin-3 (IL-3) receptors. Thus, through maintaining basal levels of cytokine receptors, RNF41 is involved in the control of hematopoietic progenitor cell differentiation into myeloerythroid lineages. Contributes to the maintenance of steady-state ERBB3 levels by mediating its growth factor-independent degradation. Involved in the degradation of the inhibitor of apoptosis BIRC6 and thus is an important regulator of cell death by promoting apoptosis. Also acts as a PRKN modifier that accelerates its degradation, resulting in a reduction of PRKN activity, influencing the balance of intracellular redox state. The RNF41-PRKN pathway regulates autophagosome-lysosome fusion during late mitophagy. Mitophagy is a selective form of autophagy necessary for mitochondrial quality control. The protein is E3 ubiquitin-protein ligase NRDP1 (Rnf41) of Mus musculus (Mouse).